Reading from the N-terminus, the 513-residue chain is Microtubule-associated protein 70-5 (513 aa).

Disordered regions lie at residues 1–20 (MTAAENPFVSDTSSLQSQLK), 60–81 (KLGATENQVDQKELERKKLEEE), 347–367 (FLTSGGGSKKRSSSQLRGSVT), and 393–413 (ANGLTDQHEEDSERKTEEDGN). Over residues 9-18 (VSDTSSLQSQ) the composition is skewed to polar residues. Residues 10–322 (SDTSSLQSQL…LKLRLKTIED (313 aa)) adopt a coiled-coil conformation. The span at 60–80 (KLGATENQVDQKELERKKLEE) shows a compositional bias: basic and acidic residues. Residues 190–400 (FLEKINRQKV…ITANGLTDQH (211 aa)) are required for targeting to microtubules. Residues 426 to 501 (DRLQKEVIAL…EESKLCRKAK (76 aa)) are a coiled coil.

Belongs to the MAP70 family. Interacts with MAP70.1 and itself.

The protein resides in the cytoplasm. It localises to the cytoskeleton. Functionally, plant-specific protein that interact with microtubules and regulates microtubule dynamics. May play a role in anisotropic cell expansion and organ growth. In association with MAP70.1, is essential for the normal banding pattern of secondary cell wall and for the proper development of xylem tracheary elements and wood formation. This is Microtubule-associated protein 70-5 (MAP70.5) from Arabidopsis thaliana (Mouse-ear cress).